Reading from the N-terminus, the 276-residue chain is Acyl-[acyl-carrier-protein]--UDP-N-acetylglucosamine O-acyltransferase (276 aa).

This sequence belongs to the transferase hexapeptide repeat family. LpxA subfamily. In terms of assembly, homotrimer.

It localises to the cytoplasm. The catalysed reaction is a (3R)-hydroxyacyl-[ACP] + UDP-N-acetyl-alpha-D-glucosamine = a UDP-3-O-[(3R)-3-hydroxyacyl]-N-acetyl-alpha-D-glucosamine + holo-[ACP]. Its pathway is glycolipid biosynthesis; lipid IV(A) biosynthesis; lipid IV(A) from (3R)-3-hydroxytetradecanoyl-[acyl-carrier-protein] and UDP-N-acetyl-alpha-D-glucosamine: step 1/6. Involved in the biosynthesis of lipid A, a phosphorylated glycolipid that anchors the lipopolysaccharide to the outer membrane of the cell. In Rippkaea orientalis (strain PCC 8801 / RF-1) (Cyanothece sp. (strain PCC 8801)), this protein is Acyl-[acyl-carrier-protein]--UDP-N-acetylglucosamine O-acyltransferase.